The following is a 534-amino-acid chain: C-type lectin domain family 18 member A (534 aa).

The segment at 47 to 88 is disordered; sequence GALPVAGKPEPMARSLASAPVSPWHHMDRGSTTPAKARSHSA. Residues 139–270 enclose the SCP domain; the sequence is LTAHNRLRSR…EAMEAFVCAY (132 aa). The EGF-like domain occupies 316–349; that stretch reads PRNPCRMSCRNLGHLNISTCRCHCQPGYTGRYCQ. Cystine bridges form between Cys324–Cys337, Cys339–Cys348, Cys415–Cys520, and Cys496–Cys512. The region spanning 394–521 is the C-type lectin domain; that stretch reads IDGDCFMVSP…CKTRNRYICQ (128 aa).

Its subcellular location is the secreted. The polypeptide is C-type lectin domain family 18 member A (Clec18a) (Mus musculus (Mouse)).